A 636-amino-acid polypeptide reads, in one-letter code: Protein cueball (636 aa).

Positions 1-27 are cleaved as a signal peptide; the sequence is MKLCTSQQFGVAVLFIVLNICSPLADA. Topologically, residues 28–517 are extracellular; sequence SPIAWDFAVT…ADGPSSLRSG (490 aa). N-linked (GlcNAc...) asparagine glycans are attached at residues asparagine 83 and asparagine 109. LDL-receptor class B repeat units follow at residues 122–169, 170–214, and 215–260; these read RNLF…DICR, RQLY…DQLS, and DRIF…TEDT. N-linked (GlcNAc...) asparagine glycosylation occurs at asparagine 190. Residues asparagine 285 and asparagine 339 are each glycosylated (N-linked (GlcNAc...) asparagine). EGF-like domains follow at residues 350–384 and 419–456; these read RMDA…ARCE and EYYK…TRCE. Cystine bridges form between cysteine 359/cysteine 372, cysteine 374/cysteine 383, cysteine 423/cysteine 433, cysteine 427/cysteine 444, and cysteine 446/cysteine 455. N-linked (GlcNAc...) asparagine glycosylation is found at asparagine 449, asparagine 458, and asparagine 493. The chain crosses the membrane as a helical span at residues 518 to 538; sequence SVIIVLVVGIVSSLALVAVIV. The Cytoplasmic segment spans residues 539–636; sequence HGLRLIYKPK…IHNMEDDLLT (98 aa).

The protein belongs to the cueball family.

Its subcellular location is the cell membrane. Has a role in spermatogenesis and oogenesis. This is Protein cueball from Drosophila virilis (Fruit fly).